A 313-amino-acid polypeptide reads, in one-letter code: Intelectin-1a (313 aa).

The signal sequence occupies residues 1 to 18 (MTQLGFLLFIMVATRGCS). The Fibrinogen C-terminal domain maps to 32 to 251 (SFFSSLPRSC…NNERAASALC (220 aa)). Cys41 and Cys70 are joined by a disulfide. Ca(2+)-binding residues include His86, Glu87, Asn89, Gly92, Gly97, Asp98, and Asp133. Cystine bridges form between Cys94/Cys280, Cys199/Cys259, and Cys251/Cys265. Residues Asn260, Glu262, Glu274, and Asp282 each contribute to the Ca(2+) site. Residues 262 to 263 (EH) and Glu274 contribute to the a carbohydrate site. Ser298 carries the GPI-anchor amidated serine lipid modification. Positions 299–313 (SSRKITEAAVLLFYR) are excised as a propeptide.

As to quaternary structure, monomer. May interact with LTF. As to expression, expressed in small intestinal Paneth cells in uninfected mice. Expression also detected in various other tissues including stomach, kidney, ovary and brain.

It is found in the cell membrane. Its subcellular location is the secreted. Its function is as follows. Lectin that specifically recognizes microbial carbohydrate chains in a calcium-dependent manner. Binds to microbial glycans that contain a terminal acyclic 1,2-diol moiety, including beta-linked D-galactofuranose (beta-Galf), D-phosphoglycerol-modified glycans, D-glycero-D-talo-oct-2-ulosonic acid (KO) and 3-deoxy-D-manno-oct-2-ulosonic acid (KDO). Binds to glycans from Gram-positive and Gram-negative bacteria, including K.pneumoniae, S.pneumoniae, Y.pestis, P.mirabilis and P.vulgaris. Does not bind mammalian glycans. Probably plays a role in the defense system against microorganisms. May function as adipokine that has no effect on basal glucose uptake but enhances insulin-stimulated glucose uptake in adipocytes. Increases AKT phosphorylation in the absence and presence of insulin. May interact with lactoferrin/LTF and increase its uptake, and may thereby play a role in iron absorption. In Mus musculus (Mouse), this protein is Intelectin-1a (Itln1).